We begin with the raw amino-acid sequence, 199 residues long: WASH complex subunit 3 (199 aa).

A coiled-coil region spans residues 47 to 76 (VCEEKLSALSLRIQQIETTLNILEAKLSSI). The span at 93–120 (NISNGHLPSQPDAQSVVVSPQSDNNSMN) shows a compositional bias: polar residues. Disordered regions lie at residues 93-136 (NISN…NITT) and 170-199 (PDLL…SFSD). Residues 183–192 (GEPEAEESSD) show a composition bias toward acidic residues.

The protein belongs to the CCDC53 family. In terms of assembly, component of the WASH complex.

This Xenopus laevis (African clawed frog) protein is WASH complex subunit 3.